The chain runs to 228 residues: Delta-type opioid receptor (228 aa).

A helical transmembrane segment spans residues Gly1–Val3. Topologically, residues Arg4–Asn13 are cytoplasmic. A helical transmembrane segment spans residues Ile14–Leu38. Topologically, residues Met39–Lys50 are extracellular. Cys49 and Cys126 are disulfide-bonded. Residues Ala51–Val72 form a helical membrane-spanning segment. Residues Asp73–Ala91 are Cytoplasmic-facing. Residues Lys92–Met114 form a helical membrane-spanning segment. The Extracellular segment spans residues Ala115–Ser134. Residues Trp135–Leu166 form a helical membrane-spanning segment. Over Arg167–Arg189 the chain is Cytoplasmic. Residues Met190–Trp212 form a helical membrane-spanning segment. Topologically, residues Thr213–Ala227 are extracellular.

This sequence belongs to the G-protein coupled receptor 1 family. In terms of assembly, may form homooligomers. Forms a heterodimer with OPRM1. Interacts with GPRASP1. Interacts with RTP4; the interaction promotes cell surface localization of the OPRD1-OPRM1 heterodimer. In terms of processing, ubiquitinated. A basal ubiquitination seems not to be related to degradation. Ubiquitination is increased upon formation of OPRM1:OPRD1 oligomers leading to proteasomal degradation; the ubiquitination is diminished by RTP4. As to expression, detected in myenteric plexus and smooth muscle (at protein level). Detected in brain and intestine.

The protein resides in the cell membrane. Functionally, G-protein coupled receptor that functions as a receptor for endogenous enkephalins and for a subset of other opioids. Ligand binding causes a conformation change that triggers signaling via guanine nucleotide-binding proteins (G proteins) and modulates the activity of down-stream effectors, such as adenylate cyclase. Signaling leads to the inhibition of adenylate cyclase activity. Inhibits neurotransmitter release by reducing calcium ion currents and increasing potassium ion conductance. Plays a role in the perception of pain and in opiate-mediated analgesia. Plays a role in developing analgesic tolerance to morphine. This Sus scrofa (Pig) protein is Delta-type opioid receptor (OPRD1).